Consider the following 101-residue polypeptide: A-type ATP synthase subunit F (101 aa).

The protein belongs to the V-ATPase F subunit family. Has multiple subunits with at least A(3), B(3), C, D, E, F, H, I and proteolipid K(x).

The protein localises to the cell membrane. Its function is as follows. Component of the A-type ATP synthase that produces ATP from ADP in the presence of a proton gradient across the membrane. The polypeptide is A-type ATP synthase subunit F (Methanosarcina acetivorans (strain ATCC 35395 / DSM 2834 / JCM 12185 / C2A)).